Here is a 100-residue protein sequence, read N- to C-terminus: MNLTPREKDKLLISMAAIVARRRLERGVKLNYPEAIALISDFVVEGARDGRPVAELMEAGAHVISRDQVMEGIAEMIHDVQVEATFPDGTKLVTVHEPIR.

The protein belongs to the urease gamma subunit family. In terms of assembly, heterotrimer of UreA (gamma), UreB (beta) and UreC (alpha) subunits. Three heterotrimers associate to form the active enzyme.

Its subcellular location is the cytoplasm. The catalysed reaction is urea + 2 H2O + H(+) = hydrogencarbonate + 2 NH4(+). The protein operates within nitrogen metabolism; urea degradation; CO(2) and NH(3) from urea (urease route): step 1/1. The protein is Urease subunit gamma of Rhizobium etli (strain ATCC 51251 / DSM 11541 / JCM 21823 / NBRC 15573 / CFN 42).